A 622-amino-acid chain; its full sequence is Chaperone protein HscA homolog (622 aa).

This sequence belongs to the heat shock protein 70 family.

Functionally, chaperone involved in the maturation of iron-sulfur cluster-containing proteins. Has a low intrinsic ATPase activity which is markedly stimulated by HscB. The chain is Chaperone protein HscA homolog from Burkholderia pseudomallei (strain 668).